A 206-amino-acid chain; its full sequence is Adenylyl-sulfate kinase (206 aa).

36–43 (GLSGSGKS) lines the ATP pocket. The active-site Phosphoserine intermediate is Ser-110.

This sequence belongs to the APS kinase family.

The enzyme catalyses adenosine 5'-phosphosulfate + ATP = 3'-phosphoadenylyl sulfate + ADP + H(+). The protein operates within sulfur metabolism; hydrogen sulfide biosynthesis; sulfite from sulfate: step 2/3. Its function is as follows. Catalyzes the synthesis of activated sulfate. The protein is Adenylyl-sulfate kinase (cysC) of Buchnera aphidicola subsp. Acyrthosiphon pisum (strain APS) (Acyrthosiphon pisum symbiotic bacterium).